The chain runs to 290 residues: tRNA(Ile)-lysidine synthase, chloroplastic (290 aa).

33–38 (SGGQDS) contributes to the ATP binding site.

Belongs to the tRNA(Ile)-lysidine synthase family.

It is found in the plastid. The protein localises to the chloroplast. The catalysed reaction is cytidine(34) in tRNA(Ile2) + L-lysine + ATP = lysidine(34) in tRNA(Ile2) + AMP + diphosphate + H(+). In terms of biological role, ligates lysine onto the cytidine present at position 34 of the AUA codon-specific tRNA(Ile) that contains the anticodon CAU, in an ATP-dependent manner. Cytidine is converted to lysidine, thus changing the amino acid specificity of the tRNA from methionine to isoleucine. The sequence is that of tRNA(Ile)-lysidine synthase, chloroplastic from Cyanidioschyzon merolae (strain NIES-3377 / 10D) (Unicellular red alga).